The sequence spans 89 residues: MAKKSKIAKERKREELVNKYYELRKELKAKGDYEALRKLPRDSSPTRLTRRCKVTGRPRGVLRKFEMSRIAFREHAHKGQIPGVKKSSW.

This sequence belongs to the universal ribosomal protein uS14 family. As to quaternary structure, part of the 30S ribosomal subunit. Contacts proteins S3 and S10.

Binds 16S rRNA, required for the assembly of 30S particles and may also be responsible for determining the conformation of the 16S rRNA at the A site. In Staphylococcus aureus (strain Newman), this protein is Small ribosomal subunit protein uS14A.